Consider the following 413-residue polypeptide: Hemolin (413 aa).

A signal peptide spans Met1 to Ala18. 4 consecutive Ig-like C2-type domains span residues Pro25–Ser112, Pro122–Arg211, Pro233–Thr322, and Pro327–Asn413. Disulfide bonds link Cys46-Cys97, Cys140-Cys199, Cys252-Cys305, and Cys349-Cys395. Residue Asn283 is glycosylated (N-linked (GlcNAc...) asparagine).

This sequence belongs to the hemolin family. Expressed in larval bristles.

The protein localises to the secreted. Its activity is regulated as follows. Increased activity in presence of phospholipids (low concentrations) and calcium ions. Inhibited by PMSF. Not affected by EDTA and E-64. Its function is as follows. Bristle toxin involved in caterpillar defense by participating in hemorrhagic syndrome characterized by a consumptive coagulopathy. Exhibits procoagulant activity through selective factor X proteolytic activation. Activates factor X in a dose- and time-dependent manner but does not activate gamma-carboxyglutamic acid domainless factor X. Its activity does not depend on calcium ions. Also functions as a growth stimulator and an inhibitor of cellular death for endothelial cells. In vitro, increases proliferation of human umbilical vein endothelial cells (HUVEC) and inhibits the apoptosis induced by starvation. Also increases slightly the complement decay-accelerating factor (CD55), which protects cells from complement-mediated lysis. On the other hand, does not alter the release or expression of von Willebrand factor (VWF), tissue factor (F3), intercellular adhesion molecule-1 (ICAM1), interleukin-8 (CXCL8), and prostacyclin. Does not show fibrinolytic or fibrinogenolytic activities. In Lonomia obliqua (Moth), this protein is Hemolin.